Reading from the N-terminus, the 193-residue chain is Large ribosomal subunit protein uL18 (193 aa).

This sequence belongs to the universal ribosomal protein uL18 family. Part of the 50S ribosomal subunit. Contacts the 5S and 23S rRNAs.

Functionally, this is one of the proteins that bind and probably mediate the attachment of the 5S RNA into the large ribosomal subunit, where it forms part of the central protuberance. The sequence is that of Large ribosomal subunit protein uL18 from Methanococcus vannielii (strain ATCC 35089 / DSM 1224 / JCM 13029 / OCM 148 / SB).